We begin with the raw amino-acid sequence, 273 residues long: Type III pantothenate kinase (273 aa).

5-12 (DVGNSHVV) lines the ATP pocket. Position 112-115 (112-115 (GTDL)) interacts with substrate. D114 functions as the Proton acceptor in the catalytic mechanism. D134 is a binding site for K(+). T137 is an ATP binding site. T189 is a substrate binding site.

It belongs to the type III pantothenate kinase family. In terms of assembly, homodimer. The cofactor is NH4(+). Requires K(+) as cofactor.

It localises to the cytoplasm. The catalysed reaction is (R)-pantothenate + ATP = (R)-4'-phosphopantothenate + ADP + H(+). It participates in cofactor biosynthesis; coenzyme A biosynthesis; CoA from (R)-pantothenate: step 1/5. Catalyzes the phosphorylation of pantothenate (Pan), the first step in CoA biosynthesis. In Treponema pallidum subsp. pallidum (strain SS14), this protein is Type III pantothenate kinase.